Reading from the N-terminus, the 363-residue chain is Aminomethyltransferase (363 aa).

The protein belongs to the GcvT family. In terms of assembly, the glycine cleavage system is composed of four proteins: P, T, L and H.

It carries out the reaction N(6)-[(R)-S(8)-aminomethyldihydrolipoyl]-L-lysyl-[protein] + (6S)-5,6,7,8-tetrahydrofolate = N(6)-[(R)-dihydrolipoyl]-L-lysyl-[protein] + (6R)-5,10-methylene-5,6,7,8-tetrahydrofolate + NH4(+). In terms of biological role, the glycine cleavage system catalyzes the degradation of glycine. This chain is Aminomethyltransferase, found in Nitrosomonas europaea (strain ATCC 19718 / CIP 103999 / KCTC 2705 / NBRC 14298).